The following is a 1006-amino-acid chain: Phosphatidylinositol 4,5-bisphosphate 5-phosphatase A (1006 aa).

Residues 1–416 form a disordered region; the sequence is MEGQSSRGSR…SSSPWSAQPT (416 aa). A compositionally biased stretch (polar residues) spans 27-41; it reads VAQTGAPSKVDSSFQ. An Asymmetric dimethylarginine; alternate modification is found at Arg-56. The residue at position 56 (Arg-56) is an Omega-N-methylarginine; alternate. Arg-65 bears the Omega-N-methylarginine mark. Arg-76 is subject to Asymmetric dimethylarginine. Arg-83 carries the post-translational modification Asymmetric dimethylarginine; alternate. Arg-83 is modified (omega-N-methylarginine; alternate). Residues 94 to 112 show a composition bias toward polar residues; the sequence is GQKTATAHRSSSLAPTSVG. The short motif at 102–107 is the RSXSXX motif 1 element; that stretch reads RSSSLA. Low complexity predominate over residues 180-193; it reads LAASGLSLALASEE. Positions 196–209 are enriched in pro residues; the sequence is PELPSTPSPVPSPV. Residues 210–234 are compositionally biased toward low complexity; it reads LSPTQEQALAPASTASGAASVGQTS. Residues 256–273 are compositionally biased toward polar residues; sequence PAQTSGPTGSPPCIQTSP. Residues Ser-291 and Ser-324 each carry the phosphoserine modification. Over residues 337–347 the composition is skewed to pro residues; that stretch reads VPPPLPKPPRS. The SH3-binding signature appears at 345–350; it reads PRSPSR. Low complexity-rich tracts occupy residues 348–360 and 398–409; these read PSRSPSHSPNRSP and TTSSSTSTLSSS. The short motif at 350–355 is the RSXSXX motif 2 element; it reads RSPSHS. Positions 425–728 are catalytic; sequence ITVVTWNVGT…SDHKPVAAQF (304 aa). The required for ruffle localization stretch occupies residues 729–840; the sequence is LLQFAFRDDM…IGITEPFQIS (112 aa). A compositionally biased stretch (low complexity) spans 844–858; it reads SELASSSTDSSGTSS. The disordered stretch occupies residues 844–1006; sequence SELASSSTDS…RGLEEGGLGP (163 aa). 2 short sequence motifs (RSXSXX motif) span residues 874–879 and 885–890; these read RSPSPG and RSRSPG. Ser-903 carries the phosphoserine modification. The RSXSXX motif 5 motif lies at 911-916; it reads RSPSPQ. Over residues 927-946 the composition is skewed to low complexity; that stretch reads RSSNGSSRGSSEEGPSGLPG. At Ser-990 the chain carries Phosphoserine.

The protein belongs to the inositol 1,4,5-trisphosphate 5-phosphatase type II family.

It localises to the cytoplasm. The enzyme catalyses 1D-myo-inositol 1,4,5-trisphosphate + H2O = 1D-myo-inositol 1,4-bisphosphate + phosphate. The catalysed reaction is 1D-myo-inositol 1,3,4,5-tetrakisphosphate + H2O = 1D-myo-inositol 1,3,4-trisphosphate + phosphate. It carries out the reaction a 1,2-diacyl-sn-glycero-3-phospho-(1D-myo-inositol-4,5-bisphosphate) + H2O = a 1,2-diacyl-sn-glycero-3-phospho-(1D-myo-inositol 4-phosphate) + phosphate. Its function is as follows. Inositol 5-phosphatase, which converts inositol 1,4,5-trisphosphate to inositol 1,4-bisphosphate. Also converts phosphatidylinositol 4,5-bisphosphate to phosphatidylinositol 4-phosphate and inositol 1,3,4,5-tetrakisphosphate to inositol 1,3,4-trisphosphate in vitro. May be involved in modulation of the function of inositol and phosphatidylinositol polyphosphate-binding proteins that are present at membranes ruffles. The chain is Phosphatidylinositol 4,5-bisphosphate 5-phosphatase A (INPP5J) from Homo sapiens (Human).